We begin with the raw amino-acid sequence, 697 residues long: tRNA 5-methylaminomethyl-2-thiouridine biosynthesis bifunctional protein MnmC (697 aa).

The segment at Met-1–His-275 is tRNA (mnm(5)s(2)U34)-methyltransferase. Residues Val-280–Leu-697 form an FAD-dependent cmnm(5)s(2)U34 oxidoreductase region.

This sequence in the N-terminal section; belongs to the methyltransferase superfamily. tRNA (mnm(5)s(2)U34)-methyltransferase family. It in the C-terminal section; belongs to the DAO family. FAD serves as cofactor.

It localises to the cytoplasm. The catalysed reaction is 5-aminomethyl-2-thiouridine(34) in tRNA + S-adenosyl-L-methionine = 5-methylaminomethyl-2-thiouridine(34) in tRNA + S-adenosyl-L-homocysteine + H(+). Catalyzes the last two steps in the biosynthesis of 5-methylaminomethyl-2-thiouridine (mnm(5)s(2)U) at the wobble position (U34) in tRNA. Catalyzes the FAD-dependent demodification of cmnm(5)s(2)U34 to nm(5)s(2)U34, followed by the transfer of a methyl group from S-adenosyl-L-methionine to nm(5)s(2)U34, to form mnm(5)s(2)U34. The chain is tRNA 5-methylaminomethyl-2-thiouridine biosynthesis bifunctional protein MnmC from Shewanella sp. (strain ANA-3).